The following is a 78-amino-acid chain: DNA-directed RNA polymerase subunit Rpo5 (78 aa).

Belongs to the archaeal Rpo5/eukaryotic RPB5 RNA polymerase subunit family. In terms of assembly, part of the RNA polymerase complex.

The protein resides in the cytoplasm. The enzyme catalyses RNA(n) + a ribonucleoside 5'-triphosphate = RNA(n+1) + diphosphate. Functionally, DNA-dependent RNA polymerase (RNAP) catalyzes the transcription of DNA into RNA using the four ribonucleoside triphosphates as substrates. This Methanosarcina barkeri (strain Fusaro / DSM 804) protein is DNA-directed RNA polymerase subunit Rpo5.